Reading from the N-terminus, the 240-residue chain is Putative RING finger protein ORF96 (240 aa).

Residues 9-44 (CVVCMEEKPLVVFEPCMHHNCCESCSGHVSNCPYCR) form an RING-type 1 zinc finger. Residues 150–202 (CVICKKEIKEEVGKTYMHACCTATICKPCAKAILKAMVEKEITENLPFCPYCF) form an RING-type 2; degenerate zinc finger.

This chain is Putative RING finger protein ORF96, found in Ostreid herpesvirus 1 (isolate France) (OsHV-1).